Here is a 454-residue protein sequence, read N- to C-terminus: tRNA modification GTPase MnmE (454 aa).

(6S)-5-formyl-5,6,7,8-tetrahydrofolate contacts are provided by R23, E80, and K120. Residues 216 to 377 form the TrmE-type G domain; the sequence is GMKVVIAGRP…LRNHLKQSMG (162 aa). N226 contributes to the K(+) binding site. GTP-binding positions include 226–231, 245–251, 270–273, 335–338, and 358–360; these read NAGKSS, TDIAGTT, DTAG, NKAD, and SAR. Residue S230 participates in Mg(2+) binding. K(+)-binding residues include T245, I247, and T250. T251 serves as a coordination point for Mg(2+). Position 454 (K454) interacts with (6S)-5-formyl-5,6,7,8-tetrahydrofolate.

This sequence belongs to the TRAFAC class TrmE-Era-EngA-EngB-Septin-like GTPase superfamily. TrmE GTPase family. As to quaternary structure, homodimer. Heterotetramer of two MnmE and two MnmG subunits. It depends on K(+) as a cofactor.

It localises to the cytoplasm. In terms of biological role, exhibits a very high intrinsic GTPase hydrolysis rate. Involved in the addition of a carboxymethylaminomethyl (cmnm) group at the wobble position (U34) of certain tRNAs, forming tRNA-cmnm(5)s(2)U34. This is tRNA modification GTPase MnmE from Salmonella choleraesuis (strain SC-B67).